We begin with the raw amino-acid sequence, 211 residues long: Large ribosomal subunit protein uL4 (211 aa).

The tract at residues 42-73 (NNRQGTHSTKDRSEVRGGGIKPWAQKGTGRAR) is disordered.

It belongs to the universal ribosomal protein uL4 family. Part of the 50S ribosomal subunit.

One of the primary rRNA binding proteins, this protein initially binds near the 5'-end of the 23S rRNA. It is important during the early stages of 50S assembly. It makes multiple contacts with different domains of the 23S rRNA in the assembled 50S subunit and ribosome. Functionally, forms part of the polypeptide exit tunnel. This chain is Large ribosomal subunit protein uL4, found in Leptospira biflexa serovar Patoc (strain Patoc 1 / Ames).